The following is a 475-amino-acid chain: Putative amidase AmiD (475 aa).

Catalysis depends on charge relay system residues Lys93 and Ser166. Ser190 (acyl-ester intermediate) is an active-site residue.

Belongs to the amidase family.

It catalyses the reaction a monocarboxylic acid amide + H2O = a monocarboxylate + NH4(+). This Mycobacterium bovis (strain ATCC BAA-935 / AF2122/97) protein is Putative amidase AmiD (amiD).